The sequence spans 239 residues: MKISSIDSIFAGWDGSITEARRLQSDMAERIVLKDDLNLLSEPTLLAGFDVGFEDEGRTTRAAAVLMNACDLKLLETHVVRVPTSMPYVPGLLSFRELPALLQALTQLSRIPALVFVDGHGIAHPRRLGIAAHFGLVTNLPCIGVAKKRLVGDFVEPGTAFGEHTPILLHGTQVGWALRSKIRCKPLMISPGHKISLHSALTWTQRCLNGYRLPEPTRQADRLASRRGQKIVSDLPSLL.

2 residues coordinate Mg(2+): Asp-50 and Asp-118.

It belongs to the endonuclease V family. Mg(2+) serves as cofactor.

The protein localises to the cytoplasm. It catalyses the reaction Endonucleolytic cleavage at apurinic or apyrimidinic sites to products with a 5'-phosphate.. In terms of biological role, DNA repair enzyme involved in the repair of deaminated bases. Selectively cleaves double-stranded DNA at the second phosphodiester bond 3' to a deoxyinosine leaving behind the intact lesion on the nicked DNA. This chain is Endonuclease V, found in Xylella fastidiosa (strain 9a5c).